The following is a 432-amino-acid chain: MSLNIETTQGLERRVAITVPTEIVSKAVREEFKRAAKNVRVDGFRKGHVPAHIIEQRFGASIRQDVLNDLLPRHFFNAVIAEKINIAGRPTFAIETFEEGKDLVFTATFEVYPEVKLQGLENIKVEKPTVEITEADIDKMIDVLRKQQATWAESQDVVKADDRVTIDFVGSVDGEEFEGGKATDFVLFMGQGRMIPGFEEGIVGHKAGEQFDIDVTFPAEYHAENLKGKAAKFAITLKKIENMVLPELTDEFVAKFGPNTKSVADLRAEIRKNMERELKNALVSRVKQQVINGLIEQNPIDVPVSAVEEEINVLRNQAAQRFGGNAQQTAQLPRELFEAEATRRVQVGLLFSEVIKSNELKADEERAKAMIADIASAYEQPAEVVEYYSKNEELMNNIRNVVLEEQAVDAVLAKAQVTEKVSSFDEIMNPQA.

The PPIase FKBP-type domain occupies aspartate 161–proline 246.

The protein belongs to the FKBP-type PPIase family. Tig subfamily.

The protein localises to the cytoplasm. It catalyses the reaction [protein]-peptidylproline (omega=180) = [protein]-peptidylproline (omega=0). Its function is as follows. Involved in protein export. Acts as a chaperone by maintaining the newly synthesized protein in an open conformation. Functions as a peptidyl-prolyl cis-trans isomerase. This chain is Trigger factor (tig), found in Haemophilus influenzae (strain ATCC 51907 / DSM 11121 / KW20 / Rd).